A 538-amino-acid polypeptide reads, in one-letter code: CTP synthase (538 aa).

The segment at 1-266 (MRTKYIFITG…DQKIVDLLNI (266 aa)) is amidoligase domain. Ser-14 serves as a coordination point for CTP. A UTP-binding site is contributed by Ser-14. ATP-binding positions include 15 to 20 (SLGKGL) and Asp-72. Residues Asp-72 and Glu-140 each coordinate Mg(2+). Residues 147 to 149 (DIE), 187 to 192 (KTKPTQ), and Lys-223 each bind CTP. Residues 187 to 192 (KTKPTQ) and Lys-223 each bind UTP. 239 to 241 (KDV) contributes to the ATP binding site. One can recognise a Glutamine amidotransferase type-1 domain in the interval 291-533 (NIAIVGKYVN…IEAALRYRKK (243 aa)). Gly-353 serves as a coordination point for L-glutamine. Cys-380 functions as the Nucleophile; for glutamine hydrolysis in the catalytic mechanism. L-glutamine contacts are provided by residues 381 to 384 (LGMQ), Glu-404, and Arg-461. Catalysis depends on residues His-506 and Glu-508.

Belongs to the CTP synthase family. As to quaternary structure, homotetramer.

It carries out the reaction UTP + L-glutamine + ATP + H2O = CTP + L-glutamate + ADP + phosphate + 2 H(+). The catalysed reaction is L-glutamine + H2O = L-glutamate + NH4(+). It catalyses the reaction UTP + NH4(+) + ATP = CTP + ADP + phosphate + 2 H(+). It functions in the pathway pyrimidine metabolism; CTP biosynthesis via de novo pathway; CTP from UDP: step 2/2. With respect to regulation, allosterically activated by GTP, when glutamine is the substrate; GTP has no effect on the reaction when ammonia is the substrate. The allosteric effector GTP functions by stabilizing the protein conformation that binds the tetrahedral intermediate(s) formed during glutamine hydrolysis. Inhibited by the product CTP, via allosteric rather than competitive inhibition. Functionally, catalyzes the ATP-dependent amination of UTP to CTP with either L-glutamine or ammonia as the source of nitrogen. Regulates intracellular CTP levels through interactions with the four ribonucleotide triphosphates. This is CTP synthase from Syntrophus aciditrophicus (strain SB).